Consider the following 609-residue polypeptide: Glutamine--fructose-6-phosphate aminotransferase [isomerizing] (609 aa).

C2 (nucleophile; for GATase activity) is an active-site residue. The 217-residue stretch at 2–218 folds into the Glutamine amidotransferase type-2 domain; that stretch reads CGIVGAVAQR…EGDVAEVTRR (217 aa). SIS domains are found at residues 286–426 and 458–599; these read AAEF…HNGM and LAED…VDQP. K604 functions as the For Fru-6P isomerization activity in the catalytic mechanism.

As to quaternary structure, homodimer.

The protein localises to the cytoplasm. The catalysed reaction is D-fructose 6-phosphate + L-glutamine = D-glucosamine 6-phosphate + L-glutamate. Its function is as follows. Catalyzes the first step in hexosamine metabolism, converting fructose-6P into glucosamine-6P using glutamine as a nitrogen source. The chain is Glutamine--fructose-6-phosphate aminotransferase [isomerizing] from Shewanella oneidensis (strain ATCC 700550 / JCM 31522 / CIP 106686 / LMG 19005 / NCIMB 14063 / MR-1).